The following is a 254-amino-acid chain: Pimeloyl-[acyl-carrier protein] methyl ester esterase (254 aa).

The AB hydrolase-1 domain maps to 14 to 242; the sequence is LVLLHGWGMN…ASHAPFISHP (229 aa). Substrate-binding positions include W20, 82-83, and 143-147; these read SL and FLAIQ. The Nucleophile role is filled by S82. Active-site residues include D207 and H235. H235 is a binding site for substrate.

It belongs to the AB hydrolase superfamily. Carboxylesterase BioH family. Monomer.

Its subcellular location is the cytoplasm. It catalyses the reaction 6-carboxyhexanoyl-[ACP] methyl ester + H2O = 6-carboxyhexanoyl-[ACP] + methanol + H(+). It functions in the pathway cofactor biosynthesis; biotin biosynthesis. The physiological role of BioH is to remove the methyl group introduced by BioC when the pimeloyl moiety is complete. It allows to synthesize pimeloyl-ACP via the fatty acid synthetic pathway through the hydrolysis of the ester bonds of pimeloyl-ACP esters. The protein is Pimeloyl-[acyl-carrier protein] methyl ester esterase of Aeromonas hydrophila subsp. hydrophila (strain ATCC 7966 / DSM 30187 / BCRC 13018 / CCUG 14551 / JCM 1027 / KCTC 2358 / NCIMB 9240 / NCTC 8049).